The following is a 111-amino-acid chain: Large ribosomal subunit protein uL22 (111 aa).

This sequence belongs to the universal ribosomal protein uL22 family. As to quaternary structure, part of the 50S ribosomal subunit.

In terms of biological role, this protein binds specifically to 23S rRNA; its binding is stimulated by other ribosomal proteins, e.g. L4, L17, and L20. It is important during the early stages of 50S assembly. It makes multiple contacts with different domains of the 23S rRNA in the assembled 50S subunit and ribosome. Its function is as follows. The globular domain of the protein is located near the polypeptide exit tunnel on the outside of the subunit, while an extended beta-hairpin is found that lines the wall of the exit tunnel in the center of the 70S ribosome. The polypeptide is Large ribosomal subunit protein uL22 (Xanthomonas oryzae pv. oryzae (strain PXO99A)).